Reading from the N-terminus, the 187-residue chain is GTP cyclohydrolase 1 (187 aa).

Positions 78, 81, and 150 each coordinate Zn(2+).

Belongs to the GTP cyclohydrolase I family. As to quaternary structure, homomer.

The enzyme catalyses GTP + H2O = 7,8-dihydroneopterin 3'-triphosphate + formate + H(+). It functions in the pathway cofactor biosynthesis; 7,8-dihydroneopterin triphosphate biosynthesis; 7,8-dihydroneopterin triphosphate from GTP: step 1/1. This chain is GTP cyclohydrolase 1, found in Brevibacillus brevis (strain 47 / JCM 6285 / NBRC 100599).